An 81-amino-acid polypeptide reads, in one-letter code: Neuronatin (81 aa).

Belongs to the neuronatin family.

Functionally, may participate in the maintenance of segment identity in the hindbrain and pituitary development, and maturation or maintenance of the overall structure of the nervous system. May function as a regulatory subunit of ion channels. In Sus scrofa (Pig), this protein is Neuronatin (NNAT).